Here is an 888-residue protein sequence, read N- to C-terminus: Leucine--tRNA ligase (888 aa).

The 'HIGH' region signature appears at 43–53 (PYPSGRIHMGH). The 'KMSKS' region motif lies at 644 to 648 (KMSKS). Lysine 647 provides a ligand contact to ATP.

The protein belongs to the class-I aminoacyl-tRNA synthetase family.

The protein localises to the cytoplasm. The catalysed reaction is tRNA(Leu) + L-leucine + ATP = L-leucyl-tRNA(Leu) + AMP + diphosphate. The chain is Leucine--tRNA ligase from Rhodopseudomonas palustris (strain BisA53).